The primary structure comprises 329 residues: Malate dehydrogenase (329 aa).

12 to 18 (GAAGQIG) lines the NAD(+) pocket. Arg-93 and Arg-99 together coordinate substrate. NAD(+) contacts are provided by residues Asn-106, Gln-113, and 130–132 (VGN). 2 residues coordinate substrate: Asn-132 and Arg-166. His-191 functions as the Proton acceptor in the catalytic mechanism.

It belongs to the LDH/MDH superfamily. MDH type 2 family.

It carries out the reaction (S)-malate + NAD(+) = oxaloacetate + NADH + H(+). Its function is as follows. Catalyzes the reversible oxidation of malate to oxaloacetate. This chain is Malate dehydrogenase, found in Aromatoleum aromaticum (strain DSM 19018 / LMG 30748 / EbN1) (Azoarcus sp. (strain EbN1)).